Here is an 80-residue protein sequence, read N- to C-terminus: Acyl carrier protein (80 aa).

A Carrier domain is found at 4 to 79 (DEIFSKVRSI…DVVNFIKKRK (76 aa)). Position 39 is an O-(pantetheine 4'-phosphoryl)serine (serine 39).

This sequence belongs to the acyl carrier protein (ACP) family. In terms of processing, 4'-phosphopantetheine is transferred from CoA to a specific serine of apo-ACP by AcpS. This modification is essential for activity because fatty acids are bound in thioester linkage to the sulfhydryl of the prosthetic group.

It is found in the cytoplasm. It functions in the pathway lipid metabolism; fatty acid biosynthesis. In terms of biological role, carrier of the growing fatty acid chain in fatty acid biosynthesis. The protein is Acyl carrier protein of Borrelia garinii subsp. bavariensis (strain ATCC BAA-2496 / DSM 23469 / PBi) (Borreliella bavariensis).